A 442-amino-acid chain; its full sequence is ORC1-type DNA replication protein 8 (442 aa).

Residues 66 to 70 (VGKTA) and Tyr218 contribute to the ATP site.

The protein belongs to the CDC6/cdc18 family.

In terms of biological role, involved in regulation of DNA replication. This Haloarcula marismortui (strain ATCC 43049 / DSM 3752 / JCM 8966 / VKM B-1809) (Halobacterium marismortui) protein is ORC1-type DNA replication protein 8 (cdc6h).